Consider the following 303-residue polypeptide: ATP phosphoribosyltransferase (303 aa).

The protein belongs to the ATP phosphoribosyltransferase family. Long subfamily. It depends on Mg(2+) as a cofactor.

Its subcellular location is the cytoplasm. The enzyme catalyses 1-(5-phospho-beta-D-ribosyl)-ATP + diphosphate = 5-phospho-alpha-D-ribose 1-diphosphate + ATP. Its pathway is amino-acid biosynthesis; L-histidine biosynthesis; L-histidine from 5-phospho-alpha-D-ribose 1-diphosphate: step 1/9. Its activity is regulated as follows. Feedback inhibited by histidine. Its function is as follows. Catalyzes the condensation of ATP and 5-phosphoribose 1-diphosphate to form N'-(5'-phosphoribosyl)-ATP (PR-ATP). Has a crucial role in the pathway because the rate of histidine biosynthesis seems to be controlled primarily by regulation of HisG enzymatic activity. This chain is ATP phosphoribosyltransferase, found in Haemophilus influenzae (strain 86-028NP).